Here is a 412-residue protein sequence, read N- to C-terminus: Alanyl-tRNA editing protein Aarsd1 (412 aa).

2 residues coordinate Zn(2+): His109 and His113. At Ser174 the chain carries Phosphoserine. Positions 209 and 213 each coordinate Zn(2+).

It belongs to the class-II aminoacyl-tRNA synthetase family. Alax-L subfamily. Requires Zn(2+) as cofactor.

It is found in the cytoplasm. Its function is as follows. Functions in trans to edit the amino acid moiety from incorrectly charged tRNA(Ala). The protein is Alanyl-tRNA editing protein Aarsd1 (AARSD1) of Homo sapiens (Human).